Reading from the N-terminus, the 209-residue chain is NDR1/HIN1-like protein 1 (209 aa).

A helical transmembrane segment spans residues 18–38 (IFWSIIFVLFIIFLTILLIWA). Residue Asn-58 is glycosylated (N-linked (GlcNAc...) asparagine).

Expressed in rosette leaves, cauline leaves, stems, and siliques, and at lower levels in roots and flowers.

It is found in the cell membrane. Functionally, may play a role in plant immunity. The sequence is that of NDR1/HIN1-like protein 1 from Arabidopsis thaliana (Mouse-ear cress).